Reading from the N-terminus, the 238-residue chain is Small ribosomal subunit protein uS2 (238 aa).

The protein belongs to the universal ribosomal protein uS2 family.

The sequence is that of Small ribosomal subunit protein uS2 from Actinobacillus pleuropneumoniae serotype 5b (strain L20).